Consider the following 267-residue polypeptide: Cilia- and flagella-associated protein 300 (267 aa).

It belongs to the CFAP300 family. In terms of assembly, interacts with DNAAF2. As to expression, expressed in nasal epithelial cells.

The protein localises to the cytoplasm. The protein resides in the cytoskeleton. It localises to the cilium axoneme. In terms of biological role, cilium- and flagellum-specific protein that plays a role in axonemal structure organization and motility. May play a role in outer and inner dynein arm assembly. The chain is Cilia- and flagella-associated protein 300 from Homo sapiens (Human).